The following is a 553-amino-acid chain: Putative transport protein KPK_0013 (553 aa).

5 helical membrane passes run 4-24, 28-48, 65-85, 95-115, and 158-178; these read IALT…IGNV, GVGF…HFVD, FGLI…FFAS, LFAI…HKLF, and MSYA…MWLV. 2 RCK C-terminal domains span residues 192-276 and 279-361; these read RFEE…VIGQ and ATSL…ELGN. Transmembrane regions (helical) follow at residues 371 to 391, 403 to 425, 437 to 457, 464 to 484, 493 to 513, and 532 to 552; these read MLPV…PLFI, AGGP…LYWF, LGIV…FVAT, LSWI…VGIL, YLTL…LAFA, and PLVM…FWGL.

This sequence belongs to the AAE transporter (TC 2.A.81) family. YidE subfamily.

The protein resides in the cell membrane. This Klebsiella pneumoniae (strain 342) protein is Putative transport protein KPK_0013.